The following is a 175-amino-acid chain: ATP synthase subunit delta (175 aa).

This sequence belongs to the ATPase delta chain family. As to quaternary structure, F-type ATPases have 2 components, F(1) - the catalytic core - and F(0) - the membrane proton channel. F(1) has five subunits: alpha(3), beta(3), gamma(1), delta(1), epsilon(1). F(0) has three main subunits: a(1), b(2) and c(10-14). The alpha and beta chains form an alternating ring which encloses part of the gamma chain. F(1) is attached to F(0) by a central stalk formed by the gamma and epsilon chains, while a peripheral stalk is formed by the delta and b chains.

The protein resides in the cell membrane. Its function is as follows. F(1)F(0) ATP synthase produces ATP from ADP in the presence of a proton or sodium gradient. F-type ATPases consist of two structural domains, F(1) containing the extramembraneous catalytic core and F(0) containing the membrane proton channel, linked together by a central stalk and a peripheral stalk. During catalysis, ATP synthesis in the catalytic domain of F(1) is coupled via a rotary mechanism of the central stalk subunits to proton translocation. Functionally, this protein is part of the stalk that links CF(0) to CF(1). It either transmits conformational changes from CF(0) to CF(1) or is implicated in proton conduction. The chain is ATP synthase subunit delta from Lactococcus lactis subsp. cremoris (strain MG1363).